Reading from the N-terminus, the 500-residue chain is Beta-glucosidase 30 (500 aa).

Positions 1–25 (MGIRMGRRLLFTLFLGALFCNGVYA) are cleaved as a signal peptide. Gln-46 is a binding site for a beta-D-glucoside. N-linked (GlcNAc...) asparagine glycans are attached at residues Asn-63 and Asn-114. A beta-D-glucoside contacts are provided by residues His-149 and 194 to 195 (NE). Catalysis depends on Glu-195, which acts as the Proton donor. Cys-214 and Cys-222 are oxidised to a cystine. A beta-D-glucoside is bound at residue Tyr-338. Asn-363 is a glycosylation site (N-linked (GlcNAc...) asparagine). Glu-409 lines the a beta-D-glucoside pocket. The active-site Nucleophile is the Glu-409. N-linked (GlcNAc...) asparagine glycosylation is found at Asn-416 and Asn-417. A beta-D-glucoside contacts are provided by residues Trp-456, 463–464 (EW), and Phe-472.

It belongs to the glycosyl hydrolase 1 family.

The catalysed reaction is Hydrolysis of terminal, non-reducing beta-D-glucosyl residues with release of beta-D-glucose.. This chain is Beta-glucosidase 30 (BGLU30), found in Oryza sativa subsp. japonica (Rice).